The chain runs to 88 residues: Meiosis expressed gene 1 protein homolog (88 aa).

The protein belongs to the MEIG1 family. As to quaternary structure, interacts with PACRG. Interacts with MORN3.

Its function is as follows. Essential for spermiogenesis. The protein is Meiosis expressed gene 1 protein homolog of Homo sapiens (Human).